A 340-amino-acid polypeptide reads, in one-letter code: Glycerol-3-phosphate dehydrogenase [NAD(P)+] (340 aa).

Residues Ser-11, Trp-12, Arg-33, and Lys-106 each contribute to the NADPH site. Residues Lys-106, Gly-137, and Ser-139 each contribute to the sn-glycerol 3-phosphate site. NADPH is bound at residue Ala-141. Residues Lys-192, Asp-245, Ser-255, Arg-256, and Asn-257 each contribute to the sn-glycerol 3-phosphate site. Lys-192 (proton acceptor) is an active-site residue. Arg-256 is a binding site for NADPH. 2 residues coordinate NADPH: Val-280 and Glu-282.

This sequence belongs to the NAD-dependent glycerol-3-phosphate dehydrogenase family.

It is found in the cytoplasm. It carries out the reaction sn-glycerol 3-phosphate + NAD(+) = dihydroxyacetone phosphate + NADH + H(+). The catalysed reaction is sn-glycerol 3-phosphate + NADP(+) = dihydroxyacetone phosphate + NADPH + H(+). Its pathway is membrane lipid metabolism; glycerophospholipid metabolism. In terms of biological role, catalyzes the reduction of the glycolytic intermediate dihydroxyacetone phosphate (DHAP) to sn-glycerol 3-phosphate (G3P), the key precursor for phospholipid synthesis. This is Glycerol-3-phosphate dehydrogenase [NAD(P)+] from Bacillus mycoides (strain KBAB4) (Bacillus weihenstephanensis).